The sequence spans 101 residues: Small ribosomal subunit protein uS14 (101 aa).

This sequence belongs to the universal ribosomal protein uS14 family. As to quaternary structure, part of the 30S ribosomal subunit. Contacts proteins S3 and S10.

Functionally, binds 16S rRNA, required for the assembly of 30S particles and may also be responsible for determining the conformation of the 16S rRNA at the A site. This is Small ribosomal subunit protein uS14 from Xylella fastidiosa (strain 9a5c).